Consider the following 199-residue polypeptide: Protein-methionine-sulfoxide reductase heme-binding subunit MsrQ (199 aa).

4 helical membrane passes run 8-28, 82-102, 116-136, and 153-173; these read IIWLKVCLHLVGFLPLLWLFW, LWCFVWATLHLTSYALLELGI, PYLTLGIISWLALLALTLTST, and VVYLVAILAPVHYLWSVKVLS.

It belongs to the MsrQ family. Heterodimer of a catalytic subunit (MsrP) and a heme-binding subunit (MsrQ). The cofactor is FMN. It depends on heme b as a cofactor.

Its subcellular location is the cell inner membrane. Functionally, part of the MsrPQ system that repairs oxidized periplasmic proteins containing methionine sulfoxide residues (Met-O), using respiratory chain electrons. Thus protects these proteins from oxidative-stress damage caused by reactive species of oxygen and chlorine generated by the host defense mechanisms. MsrPQ is essential for the maintenance of envelope integrity under bleach stress, rescuing a wide series of structurally unrelated periplasmic proteins from methionine oxidation, including the primary periplasmic chaperone SurA and the lipoprotein Pal. MsrQ provides electrons for reduction to the reductase catalytic subunit MsrP, using the quinone pool of the respiratory chain. In Salmonella arizonae (strain ATCC BAA-731 / CDC346-86 / RSK2980), this protein is Protein-methionine-sulfoxide reductase heme-binding subunit MsrQ.